Consider the following 150-residue polypeptide: Large ribosomal subunit protein uL15 (150 aa).

The segment at 1–51 is disordered; the sequence is MKLHTLRPAKGSVKTSKRIGRGTGSGRGGTSTKGHKGAKSRSGYSSKIGFE. Gly residues predominate over residues 21-31; the sequence is RGTGSGRGGTS.

Belongs to the universal ribosomal protein uL15 family. Part of the 50S ribosomal subunit.

Functionally, binds to the 23S rRNA. In Cytophaga hutchinsonii (strain ATCC 33406 / DSM 1761 / CIP 103989 / NBRC 15051 / NCIMB 9469 / D465), this protein is Large ribosomal subunit protein uL15.